A 587-amino-acid chain; its full sequence is 2-succinyl-5-enolpyruvyl-6-hydroxy-3-cyclohexene-1-carboxylate synthase (587 aa).

The protein belongs to the TPP enzyme family. MenD subfamily. In terms of assembly, homodimer. It depends on Mg(2+) as a cofactor. Requires Mn(2+) as cofactor. Thiamine diphosphate serves as cofactor.

The enzyme catalyses isochorismate + 2-oxoglutarate + H(+) = 5-enolpyruvoyl-6-hydroxy-2-succinyl-cyclohex-3-ene-1-carboxylate + CO2. Its pathway is quinol/quinone metabolism; 1,4-dihydroxy-2-naphthoate biosynthesis; 1,4-dihydroxy-2-naphthoate from chorismate: step 2/7. It participates in cofactor biosynthesis; phylloquinone biosynthesis. Catalyzes the thiamine diphosphate-dependent decarboxylation of 2-oxoglutarate and the subsequent addition of the resulting succinic semialdehyde-thiamine pyrophosphate anion to isochorismate to yield 2-succinyl-5-enolpyruvyl-6-hydroxy-3-cyclohexene-1-carboxylate (SEPHCHC). The protein is 2-succinyl-5-enolpyruvyl-6-hydroxy-3-cyclohexene-1-carboxylate synthase of Prochlorococcus marinus (strain MIT 9215).